A 471-amino-acid polypeptide reads, in one-letter code: Argininosuccinate lyase (471 aa).

The protein belongs to the lyase 1 family. Argininosuccinate lyase subfamily.

The protein resides in the cytoplasm. The enzyme catalyses 2-(N(omega)-L-arginino)succinate = fumarate + L-arginine. It functions in the pathway amino-acid biosynthesis; L-arginine biosynthesis; L-arginine from L-ornithine and carbamoyl phosphate: step 3/3. This is Argininosuccinate lyase from Ralstonia pickettii (strain 12J).